The chain runs to 445 residues: Methylenetetrahydrofolate--tRNA-(uracil-5-)-methyltransferase TrmFO (445 aa).

Residue Gly-9–Gly-14 participates in FAD binding.

Belongs to the MnmG family. TrmFO subfamily. Requires FAD as cofactor.

It is found in the cytoplasm. The catalysed reaction is uridine(54) in tRNA + (6R)-5,10-methylene-5,6,7,8-tetrahydrofolate + NADH + H(+) = 5-methyluridine(54) in tRNA + (6S)-5,6,7,8-tetrahydrofolate + NAD(+). It carries out the reaction uridine(54) in tRNA + (6R)-5,10-methylene-5,6,7,8-tetrahydrofolate + NADPH + H(+) = 5-methyluridine(54) in tRNA + (6S)-5,6,7,8-tetrahydrofolate + NADP(+). In terms of biological role, catalyzes the folate-dependent formation of 5-methyl-uridine at position 54 (M-5-U54) in all tRNAs. This is Methylenetetrahydrofolate--tRNA-(uracil-5-)-methyltransferase TrmFO from Aquifex aeolicus (strain VF5).